The following is a 127-amino-acid chain: NADPH-dependent 7-cyano-7-deazaguanine reductase (127 aa).

The active-site Thioimide intermediate is the Cys-40. Residue Asp-47 is the Proton donor of the active site. Substrate contacts are provided by residues 62–64 (VEL) and 81–82 (HE).

The protein belongs to the GTP cyclohydrolase I family. QueF type 1 subfamily.

The protein resides in the cytoplasm. It catalyses the reaction 7-aminomethyl-7-carbaguanine + 2 NADP(+) = 7-cyano-7-deazaguanine + 2 NADPH + 3 H(+). It participates in tRNA modification; tRNA-queuosine biosynthesis. Functionally, catalyzes the NADPH-dependent reduction of 7-cyano-7-deazaguanine (preQ0) to 7-aminomethyl-7-deazaguanine (preQ1). This Campylobacter lari (strain RM2100 / D67 / ATCC BAA-1060) protein is NADPH-dependent 7-cyano-7-deazaguanine reductase.